Consider the following 257-residue polypeptide: NAD-capped RNA hydrolase NudC (257 aa).

Position 69 (R69) interacts with substrate. Zn(2+)-binding residues include C98 and C101. Substrate is bound at residue E111. The Zn(2+) site is built by C116 and C119. Y124 is a binding site for substrate. Residues 125 to 248 form the Nudix hydrolase domain; sequence PQIAPCIIVA…TVARRLIEDT (124 aa). A158, E174, and E178 together coordinate a divalent metal cation. Residues 159-180 carry the Nudix box motif; it reads GFVEVGETLEQAVAREVMEESG. 192 to 199 contacts substrate; sequence QPWPFPQS. E219 provides a ligand contact to a divalent metal cation. Substrate is bound at residue A241.

Belongs to the Nudix hydrolase family. NudC subfamily. As to quaternary structure, homodimer. Mg(2+) serves as cofactor. It depends on Mn(2+) as a cofactor. Zn(2+) is required as a cofactor.

It catalyses the reaction a 5'-end NAD(+)-phospho-ribonucleoside in mRNA + H2O = a 5'-end phospho-adenosine-phospho-ribonucleoside in mRNA + beta-nicotinamide D-ribonucleotide + 2 H(+). The catalysed reaction is NAD(+) + H2O = beta-nicotinamide D-ribonucleotide + AMP + 2 H(+). The enzyme catalyses NADH + H2O = reduced beta-nicotinamide D-ribonucleotide + AMP + 2 H(+). Its function is as follows. mRNA decapping enzyme that specifically removes the nicotinamide adenine dinucleotide (NAD) cap from a subset of mRNAs by hydrolyzing the diphosphate linkage to produce nicotinamide mononucleotide (NMN) and 5' monophosphate mRNA. The NAD-cap is present at the 5'-end of some mRNAs and stabilizes RNA against 5'-processing. Has preference for mRNAs with a 5'-end purine. Catalyzes the hydrolysis of a broad range of dinucleotide pyrophosphates. The protein is NAD-capped RNA hydrolase NudC of Salmonella agona (strain SL483).